The sequence spans 126 residues: Class I hydrophobin 1 (126 aa).

The N-terminal stretch at 1 to 16 is a signal peptide; that stretch reads MQYMTIVAFLAATVAA. 4 disulfide bridges follow: Cys-38–Cys-100, Cys-46–Cys-94, Cys-47–Cys-75, and Cys-101–Cys-119.

It belongs to the fungal hydrophobin family.

It is found in the secreted. The protein resides in the cell wall. Functionally, aerial growth, conidiation, and dispersal of filamentous fungi in the environment rely upon a capability of their secreting small amphipathic proteins called hydrophobins (HPBs) with low sequence identity. Class I can self-assemble into an outermost layer of rodlet bundles on aerial cell surfaces, conferring cellular hydrophobicity that supports fungal growth, development and dispersal; whereas Class II form highly ordered films at water-air interfaces through intermolecular interactions but contribute nothing to the rodlet structure. HYD1 and HYD2 are required for the structural integrity of the long aerial chains of microconidia. Does not seem to be important for the ability to cause seedling disease. The protein is Class I hydrophobin 1 of Gibberella moniliformis (Maize ear and stalk rot fungus).